Consider the following 282-residue polypeptide: MSLTDGNIIEIDNLSFKYARQNKCILKNLTLNIKDGQWIALIGHNGSGKSTLARLIDGLLKAESGSIKVDGYEMNEKNIWDIRKKIGMVFQNPDNQFVGADVESDIAFGLENQGVPREEMVSRVADALKVVGMEKFATHEPARLSGGQKQRVAIAGVLALRPKIIILDEATSMLDPEGRKGLITLIKDLKDEYKFTVISITHDIDEATLADRVIVLDDGKIIDDGKPESIFIKNDELLNIGLDIPFAEKIRRELTKKGVDIPNKYFTEEEMVDWLCQFKQKN.

An ABC transporter domain is found at 9–243 (IEIDNLSFKY…NDELLNIGLD (235 aa)). An ATP-binding site is contributed by 43 to 50 (GHNGSGKS).

Belongs to the ABC transporter superfamily. Energy-coupling factor EcfA family. As to quaternary structure, forms a stable energy-coupling factor (ECF) transporter complex composed of 2 membrane-embedded substrate-binding proteins (S component), 2 ATP-binding proteins (A component) and 2 transmembrane proteins (T component).

The protein resides in the cell membrane. ATP-binding (A) component of a common energy-coupling factor (ECF) ABC-transporter complex. Unlike classic ABC transporters this ECF transporter provides the energy necessary to transport a number of different substrates. The sequence is that of Energy-coupling factor transporter ATP-binding protein EcfA1 from Ligilactobacillus salivarius (strain UCC118) (Lactobacillus salivarius).